An 868-amino-acid polypeptide reads, in one-letter code: Leucine--tRNA ligase (868 aa).

The short motif at 42 to 52 (PYPSGKLHMGH) is the 'HIGH' region element. A 'KMSKS' region motif is present at residues 627–631 (KMSKS). An ATP-binding site is contributed by Lys630.

The protein belongs to the class-I aminoacyl-tRNA synthetase family.

The protein resides in the cytoplasm. It carries out the reaction tRNA(Leu) + L-leucine + ATP = L-leucyl-tRNA(Leu) + AMP + diphosphate. This chain is Leucine--tRNA ligase, found in Pseudomonas putida (strain GB-1).